A 449-amino-acid chain; its full sequence is L-lysine-epsilon aminotransferase (449 aa).

Residues Gly128 and Ala129 each coordinate pyridoxal 5'-phosphate. Arg170 and Gln274 together coordinate 2-oxoglutarate. Arg170 lines the L-lysine pocket. Residue Gln274 coordinates pyridoxal 5'-phosphate. The residue at position 300 (Lys300) is an N6-(pyridoxal phosphate)lysine. Arg422 is a 2-oxoglutarate binding site.

This sequence belongs to the class-III pyridoxal-phosphate-dependent aminotransferase family. Pyridoxal 5'-phosphate is required as a cofactor.

The enzyme catalyses L-lysine + 2-oxoglutarate = (S)-2-amino-6-oxohexanoate + L-glutamate. In terms of biological role, catalyzes the transfer of the terminal amino group of L-lysine to alpha-ketoglutarate to yield L-glutamate and 2-aminoadipate 6-semialdehyde ((S)-2-amino-6-oxohexanoate), which is spontaneously converted to the dehydrated form 1-piperideine 6-carboxylate. The sequence is that of L-lysine-epsilon aminotransferase from Mycobacterium bovis (strain ATCC BAA-935 / AF2122/97).